A 194-amino-acid chain; its full sequence is CASP-like protein 2C2 (194 aa).

At 1 to 27 (MAAGQPRPPPPPSSVRTERVLRAACAA) the chain is on the cytoplasmic side. Residues 28–48 (MAAAGALLLGFSAETKTVIFV) form a helical membrane-spanning segment. Topologically, residues 49 to 58 (QKKAVPKDVQ) are extracellular. Residues 59–79 (ALWVLIVAAAAAAAYHAAQLA) traverse the membrane as a helical segment. At 80–113 (RCLCMDRLAGGGGGCRRLRRAVACATFLLDKGCA) the chain is on the cytoplasmic side. Residues 114 to 134 (YMVLATTVAALQACFVGLLGV) traverse the membrane as a helical segment. At 135 to 152 (EALQWSKLCNIYTRFCEQ) the chain is on the extracellular side. The helical transmembrane segment at 153–173 (AAAGMVCSLVAAAGMAVLSAF) threads the bilayer. Topologically, residues 174 to 194 (SARDLFRRRRPCSPCVQVQQV) are cytoplasmic.

The protein belongs to the Casparian strip membrane proteins (CASP) family. In terms of assembly, homodimer and heterodimers.

The protein localises to the cell membrane. The chain is CASP-like protein 2C2 from Sorghum bicolor (Sorghum).